Here is a 146-residue protein sequence, read N- to C-terminus: Hemoglobin subunit beta-1 (146 aa).

The Globin domain maps to 2–146 (EWSSNERSTI…VISALSRQYF (145 aa)). His-63 and His-92 together coordinate heme b.

It belongs to the globin family. Heterotetramer of two alpha chains and two beta chains. In terms of tissue distribution, red blood cells.

Involved in oxygen transport from gills to the various peripheral tissues. This Muraena helena (Mediterranean moray) protein is Hemoglobin subunit beta-1 (hbb1).